A 1162-amino-acid polypeptide reads, in one-letter code: DNA-directed RNA polymerase subunit beta (1162 aa).

This sequence belongs to the RNA polymerase beta chain family. As to quaternary structure, the RNAP catalytic core consists of 2 alpha, 1 beta, 1 beta' and 1 omega subunit. When a sigma factor is associated with the core the holoenzyme is formed, which can initiate transcription.

The catalysed reaction is RNA(n) + a ribonucleoside 5'-triphosphate = RNA(n+1) + diphosphate. DNA-dependent RNA polymerase catalyzes the transcription of DNA into RNA using the four ribonucleoside triphosphates as substrates. This Clavibacter michiganensis subsp. michiganensis (strain NCPPB 382) protein is DNA-directed RNA polymerase subunit beta.